The chain runs to 298 residues: Biphenyl-2,3-diol 1,2-dioxygenase (298 aa).

VOC domains lie at serine 5–glycine 119 and glycine 143–serine 264. Fe cation contacts are provided by histidine 146, histidine 210, and glutamate 260.

Belongs to the extradiol ring-cleavage dioxygenase family. Homooctamer. The enzyme is composed of two planar tetramers rotated at 45 degrees relative to each other, with a channel in the middle. Fe(2+) is required as a cofactor.

It catalyses the reaction biphenyl-2,3-diol + O2 = 2-hydroxy-6-oxo-6-phenylhexa-2,4-dienoate + H(+). The protein operates within xenobiotic degradation; biphenyl degradation; 2-hydroxy-2,4-pentadienoate and benzoate from biphenyl: step 3/4. Shows a preference for catechols with groups immediately adjacent to the hydroxyl substituents. This chain is Biphenyl-2,3-diol 1,2-dioxygenase (bphC), found in Paraburkholderia xenovorans (strain LB400).